Reading from the N-terminus, the 327-residue chain is Vacuolar protein sorting-associated protein 26A (327 aa).

Residues 306 to 327 (RTNFHQRFESPDSQASAEQPEM) are disordered. Position 315 is a phosphoserine (S315). Residues 316–327 (PDSQASAEQPEM) are compositionally biased toward polar residues.

This sequence belongs to the VPS26 family. In terms of assembly, component of the heterotrimeric retromer cargo-selective complex (CSC), also described as vacuolar protein sorting subcomplex (VPS), formed by VPS26 (VPS26A or VPS26B), VPS29 and VPS35. The CSC has a highly elongated structure with VPS26 and VPS29 binding independently at opposite distal ends of VPS35 as central platform. The CSC is believed to associate with variable sorting nexins to form functionally distinct retromer complex variants. The originally described retromer complex (also called SNX-BAR retromer) is a pentamer containing the CSC and a heterodimeric membrane-deforming subcomplex formed between SNX1 or SNX2 and SNX5 or SNX6 (also called SNX-BAR subcomplex); the respective CSC and SNX-BAR subcomplexes associate with low affinity. The CSC associates with SNX3 to form a SNX3-retromer complex. The CSC associates with SNX27, the WASH complex and the SNX-BAR subcomplex to form the SNX27-retromer complex. Interacts with VPS29, VPS35, SNX27. Interacts with SNX1, SNX2, SNX5, SNX6, SNX3, RAB7A, ECPAS, EHD1, WASHC5, SORL1.

It localises to the cytoplasm. Its subcellular location is the endosome membrane. The protein localises to the early endosome. In terms of biological role, acts as a component of the retromer cargo-selective complex (CSC). The CSC is believed to be the core functional component of retromer or respective retromer complex variants acting to prevent missorting of selected transmembrane cargo proteins into the lysosomal degradation pathway. The recruitment of the CSC to the endosomal membrane involves RAB7A and SNX3. The SNX-BAR retromer mediates retrograde transport of cargo proteins from endosomes to the trans-Golgi network (TGN) and is involved in endosome-to-plasma membrane transport for cargo protein recycling. The SNX3-retromer mediates the retrograde endosome-to-TGN transport of WLS distinct from the SNX-BAR retromer pathway. The SNX27-retromer is believed to be involved in endosome-to-plasma membrane trafficking and recycling of a broad spectrum of cargo proteins. The CSC complex seems to act as recruitment hub for other proteins, such as the WASH complex and TBC1D5. Required for retrograde transport of lysosomal enzyme receptor IGF2R. Required to regulate transcytosis of the polymeric immunoglobulin receptor (pIgR-pIgA). Required for the endosomal localization of WASHC2 (indicative for the WASH complex). Required for the endosomal localization of TBC1D5. Mediates retromer cargo recognition of SORL1 and is involved in trafficking of SORL1 implicated in sorting and processing of APP. Involved in retromer-independent lysosomal sorting of F2R. Involved in recycling of ADRB2. Acts redundantly with VSP26B in SNX-27 mediated endocytic recycling of SLC2A1/GLUT1. Enhances the affinity of SNX27 for PDZ-binding motifs in cargo proteins. In Mus musculus (Mouse), this protein is Vacuolar protein sorting-associated protein 26A (Vps26a).